Consider the following 215-residue polypeptide: Cytochrome c biogenesis ATP-binding export protein CcmA (215 aa).

One can recognise an ABC transporter domain in the interval 3 to 211 (LTAEILAARR…KMTGFAGVDN (209 aa)). ATP is bound at residue 35–42 (GKNGSGKS).

This sequence belongs to the ABC transporter superfamily. CcmA exporter (TC 3.A.1.107) family. In terms of assembly, the complex is composed of two ATP-binding proteins (CcmA) and two transmembrane proteins (CcmB).

The protein localises to the cell inner membrane. It carries out the reaction heme b(in) + ATP + H2O = heme b(out) + ADP + phosphate + H(+). In terms of biological role, part of the ABC transporter complex CcmAB involved in the biogenesis of c-type cytochromes; once thought to export heme, this seems not to be the case, but its exact role is uncertain. Responsible for energy coupling to the transport system. This is Cytochrome c biogenesis ATP-binding export protein CcmA from Rhizobium johnstonii (strain DSM 114642 / LMG 32736 / 3841) (Rhizobium leguminosarum bv. viciae).